The sequence spans 79 residues: MASDRQNLQDAFLNHVRKTKVPVTIFLINGVKLQGVITWFDNFCVLLRRDGQSQLVYKHAISTIMPAQPISLYEGEDAN.

In terms of domain architecture, Sm spans 10 to 70 (DAFLNHVRKT…ISTIMPAQPI (61 aa)).

It belongs to the Hfq family. As to quaternary structure, homohexamer.

Functionally, RNA chaperone that binds small regulatory RNA (sRNAs) and mRNAs to facilitate mRNA translational regulation in response to envelope stress, environmental stress and changes in metabolite concentrations. Also binds with high specificity to tRNAs. This Ruegeria pomeroyi (strain ATCC 700808 / DSM 15171 / DSS-3) (Silicibacter pomeroyi) protein is RNA-binding protein Hfq.